The primary structure comprises 244 residues: MERLQKVIAHAGVASRRKAEELIKEGKVKVNGKVVTELGVKVTGSDQIEVNGLKVEREEPVYFLLYKPRGVISAAQDDKGRKVVTDFFKNIPQRIYPIGRLDYDTSGLLLLTNDGEFANKLMHPKYEIDKTYVAKVKGIPPKELLRKLERGIRLEEGKTAPAKAKLLSLDKKKQTSIIQLTIHEGRNRQVRRMFEAIGHEVIKLKREEYAFLNLRGLHTGDARELTPHEVKRLRALADHGKNAF.

The S4 RNA-binding domain occupies 2 to 68; the sequence is ERLQKVIAHA…EPVYFLLYKP (67 aa). Catalysis depends on Asp102, which acts as the Nucleophile.

It belongs to the pseudouridine synthase RsuA family.

It carries out the reaction uridine(2605) in 23S rRNA = pseudouridine(2605) in 23S rRNA. Functionally, responsible for synthesis of pseudouridine from uracil-2633 in 23S ribosomal RNA. The polypeptide is Ribosomal large subunit pseudouridine synthase B (rluB) (Bacillus subtilis (strain 168)).